Consider the following 513-residue polypeptide: Cytochrome P450 4d10 (513 aa).

Residues E317 and C457 each coordinate heme.

It belongs to the cytochrome P450 family. Heme serves as cofactor.

It is found in the endoplasmic reticulum membrane. The protein localises to the microsome membrane. Functionally, may play an important role in the maintenance of specific insect-host plant relationships. May be involved in xenobiotic metabolism. The polypeptide is Cytochrome P450 4d10 (Cyp4d10) (Drosophila mettleri (Fruit fly)).